The sequence spans 1400 residues: Bromodomain-containing protein 4 (1400 aa).

The disordered stretch occupies residues 1–58; the sequence is MSTESGPGTRLRNLPVMGDGLETSQMSTTQAQAQPQPANAASTNPPPPETSNPNKPKR. The segment covering 23 to 43 has biased composition (low complexity); that stretch reads TSQMSTTQAQAQPQPANAAST. One can recognise a Bromo 1 domain in the interval 58-164; it reads RQTNQLQYLL…KLFLQKINEL (107 aa). Lys99 is covalently cross-linked (Glycyl lysine isopeptide (Lys-Gly) (interchain with G-Cter in SUMO2)). Disordered regions lie at residues 176-353 and 461-616; these read AKGR…KISE and EPEE…YEEK. Low complexity predominate over residues 197–212; the sequence is PNTTQASTSPQTQTPQ. Residues 244 to 267 are compositionally biased toward pro residues; sequence PPQPLQTPSPVPPQPPPPPAPVPQ. The segment covering 321–337 has biased composition (basic and acidic residues); it reads PRRESSRPVKPPKKDVP. The Bromo 2 domain occupies 349-458; sequence SKISEQLKCC…DVFEMRFAKM (110 aa). Ser471 carries the phosphoserine modification. Low complexity predominate over residues 479-498; it reads KVVAPPSSSDSSSDSSSDSD. 3 positions are modified to phosphoserine; by CK2: Ser485, Ser489, and Ser493. Positions 485–504 are NPS region; the sequence is SSSDSSSDSSSDSDSSTDDS. The residue at position 495 (Ser495) is a Phosphoserine. Phosphoserine; by CK2 occurs at positions 499, 500, and 504. Positions 525-580 are BID region; it reads QLAALSQPQQNKPKKKEKDKKEKKKEKHKKKEEVEENKKSKTKELPPKKTKKNNSS. A compositionally biased stretch (basic residues) spans 536-554; sequence KPKKKEKDKKEKKKEKHKK. Basic and acidic residues predominate over residues 555 to 571; sequence KEEVEENKKSKTKELPP. Lys586 participates in a covalent cross-link: Glycyl lysine isopeptide (Lys-Gly) (interchain with G-Cter in SUMO2). One can recognise an NET domain in the interval 601–683; the sequence is ESEEEDKCKP…SCLRKKRKPQ (83 aa). Ser602 carries the post-translational modification Phosphoserine. Basic and acidic residues predominate over residues 606 to 616; sequence DKCKPMSYEEK. Glycyl lysine isopeptide (Lys-Gly) (interchain with G-Cter in SUMO2) cross-links involve residues Lys646 and Lys695. Residues 675 to 1125 are disordered; sequence CLRKKRKPQA…GCPPASPAAV (451 aa). Residues 700–713 show a composition bias toward low complexity; that stretch reads SSSESESTSESSSS. Over residues 725-745 the composition is skewed to basic residues; it reads KSKKKGHTGRDQKKHHHHHHP. Pro residues-rich tracts occupy residues 748 to 787, 835 to 848, 883 to 892, and 900 to 909; these read QPAP…PPSM, PELP…PEHS, PPKPTRPPAV, and PLLPQPPMAQ. Residues 928-938 are compositionally biased toward low complexity; it reads MQMQLYLQQLQ. Composition is skewed to pro residues over residues 955–966, 975–1000, and 1013–1037; these read QPPPPLPPPPHP, PQPP…PRPV, and QPPP…PQPA. The interval 1050-1400 is C-terminal (CTD) region; that stretch reads RHHKSDPYSA…LLSIFEENLF (351 aa). Lys1053 participates in a covalent cross-link: Glycyl lysine isopeptide (Lys-Gly) (interchain with G-Cter in SUMO2). Residues 1075–1084 are compositionally biased toward polar residues; that stretch reads QMPQFQSLTH. The span at 1085–1095 shows a compositional bias: low complexity; that stretch reads QSPPQQNVQPK. Residue Lys1147 is modified to N6-acetyllysine; alternate. Lys1147 is covalently cross-linked (Glycyl lysine isopeptide (Lys-Gly) (interchain with G-Cter in SUMO1); alternate). Residue Lys1147 forms a Glycyl lysine isopeptide (Lys-Gly) (interchain with G-Cter in SUMO2); alternate linkage. Phosphoserine occurs at positions 1153 and 1162. The tract at residues 1155 to 1377 is disordered; that stretch reads IIRSEPFSTS…KREQERRRRE (223 aa). The segment covering 1211–1232 has biased composition (basic and acidic residues); the sequence is PDKDKQKQEPKTPVAPKKDLKI. A Glycyl lysine isopeptide (Lys-Gly) (interchain with G-Cter in SUMO2) cross-link involves residue Lys1233. Ser1237 and Ser1240 each carry phosphoserine. The span at 1247-1258 shows a compositional bias: low complexity; sequence TTPSSTAKSSSD. Residues 1259–1320 show a composition bias toward basic and acidic residues; the sequence is SFEHFRRAAR…AHEEARRRQE (62 aa). Positions 1321–1357 are enriched in low complexity; that stretch reads QQQQQQQQRQEQQQQQQQAAAVAAASAPQAQSSQPQS. A compositionally biased stretch (basic and acidic residues) spans 1361 to 1377; the sequence is QQRELARKREQERRRRE.

It belongs to the BET family. In terms of assembly, binds acetylated histone H4. Interacts with p53/TP53; the interaction is direct. Interacts (via CTD region) with CDK9 and CCNT1, acting as an associated component of P-TEFb complex. Interacts with RELA (when acetylated at 'Lys-310'). Interacts (via NET domain) with NSD3, CHD4, BICRA and ATAD5. The interaction with BICRA bridges BRD4 to the GBAF complex. Interacts (via NET domain) with JMJD6 (via JmjC and N-terminal domains); the interaction is stronger in presence of ssRNA and recruits JMJD6 on distal enhancers. Interacts with NSD3. Interacts with NIPBL. Phosphorylation by CK2 disrupt the intramolecular binding between the bromo domain 2 and the NPS region and promotes binding between the NPS and the BID regions, leading to activate the protein and promote binding to acetylated histones. In absence of phosphorylation, BRD4 does not localize to p53/TP53 target gene promoters, phosphorylation promoting recruitment to p53/TP53 target promoters.

The protein resides in the nucleus. Its subcellular location is the chromosome. Chromatin reader protein that recognizes and binds acetylated histones and plays a key role in transmission of epigenetic memory across cell divisions and transcription regulation. Remains associated with acetylated chromatin throughout the entire cell cycle and provides epigenetic memory for postmitotic G1 gene transcription by preserving acetylated chromatin status and maintaining high-order chromatin structure. During interphase, plays a key role in regulating the transcription of signal-inducible genes by associating with the P-TEFb complex and recruiting it to promoters. Also recruits P-TEFb complex to distal enhancers, so called anti-pause enhancers in collaboration with JMJD6. BRD4 and JMJD6 are required to form the transcriptionally active P-TEFb complex by displacing negative regulators such as HEXIM1 and 7SKsnRNA complex from P-TEFb, thereby transforming it into an active form that can then phosphorylate the C-terminal domain (CTD) of RNA polymerase II. Regulates differentiation of naive CD4(+) T-cells into T-helper Th17 by promoting recruitment of P-TEFb to promoters. Promotes phosphorylation of 'Ser-2' of the C-terminal domain (CTD) of RNA polymerase II. According to a report, directly acts as an atypical protein kinase and mediates phosphorylation of 'Ser-2' of the C-terminal domain (CTD) of RNA polymerase II; these data however need additional evidences in vivo. In addition to acetylated histones, also recognizes and binds acetylated RELA, leading to further recruitment of the P-TEFb complex and subsequent activation of NF-kappa-B. Also acts as a regulator of p53/TP53-mediated transcription: following phosphorylation by CK2, recruited to p53/TP53 specific target promoters. In Mus musculus (Mouse), this protein is Bromodomain-containing protein 4 (Brd4).